Reading from the N-terminus, the 211-residue chain is Outer-membrane lipoprotein carrier protein (211 aa).

The first 24 residues, 1–24 (MRNRIIVSACAALAMFAIQAPAHA), serve as a signal peptide directing secretion.

Belongs to the LolA family. As to quaternary structure, monomer.

The protein localises to the periplasm. In terms of biological role, participates in the translocation of lipoproteins from the inner membrane to the outer membrane. Only forms a complex with a lipoprotein if the residue after the N-terminal Cys is not an aspartate (The Asp acts as a targeting signal to indicate that the lipoprotein should stay in the inner membrane). This chain is Outer-membrane lipoprotein carrier protein, found in Cupriavidus necator (strain ATCC 17699 / DSM 428 / KCTC 22496 / NCIMB 10442 / H16 / Stanier 337) (Ralstonia eutropha).